Reading from the N-terminus, the 198-residue chain is MRAGTLWRVLALWLLSVAAWGQEDDDHADDYTQKLFTVSISGTRVVLTCPVEAEGGDIHWERDEKSLPNTKKELDLTDFSEMEHSGYYSCYVGTKNKENEHILYLKARVCEACMEVDLTTVASIVVADVCVTLGLLLLVYYWSKNRKAKCKPVTRGAGAGGRPRGQNKERPPPVPNPDYEPIRKGQRDLYSGLNQRGI.

The first 21 residues, 1–21 (MRAGTLWRVLALWLLSVAAWG), serve as a signal peptide directing secretion. The Extracellular portion of the chain corresponds to 22 to 120 (QEDDDHADDY…EACMEVDLTT (99 aa)). Residues 28 to 106 (ADDYTQKLFT…KENEHILYLK (79 aa)) enclose the Ig-like domain. A disulfide bond links Cys-49 and Cys-90. A helical transmembrane segment spans residues 121-141 (VASIVVADVCVTLGLLLLVYY). Over 142–198 (WSKNRKAKCKPVTRGAGAGGRPRGQNKERPPPVPNPDYEPIRKGQRDLYSGLNQRGI) the chain is Cytoplasmic. The disordered stretch occupies residues 153–198 (VTRGAGAGGRPRGQNKERPPPVPNPDYEPIRKGQRDLYSGLNQRGI). Positions 166 to 183 (QNKERPPPVPNPDYEPIR) are NUMB-binding region. In terms of domain architecture, ITAM spans 169-196 (ERPPPVPNPDYEPIRKGQRDLYSGLNQR). The tract at residues 170–177 (RPPPVPNP) is proline-rich sequence. Phosphotyrosine occurs at positions 179 and 190.

In terms of assembly, the TCR-CD3 complex is composed of a CD3D/CD3E and a CD3G/CD3E heterodimers that preferentially associate with TCRalpha and TCRbeta, respectively, to form TCRalpha/CD3E/CD3G and TCRbeta/CD3G/CD3E trimers. In turn, the hexamer interacts with CD3Z homodimer to form the TCR-CD3 complex. Alternatively, TCRalpha and TCRbeta can be replaced by TCRgamma and TCRdelta. Interacts with CD6. Interacts (via Proline-rich sequence) with NCK1; the interaction is ligand dependent but independent of tyrosine kinase activation. In terms of processing, phosphorylated on Tyr residues after T-cell receptor triggering by LCK in association with CD4/CD8.

It localises to the cell membrane. Its function is as follows. Part of the TCR-CD3 complex present on T-lymphocyte cell surface that plays an essential role in adaptive immune response. When antigen presenting cells (APCs) activate T-cell receptor (TCR), TCR-mediated signals are transmitted across the cell membrane by the CD3 chains CD3D, CD3E, CD3G and CD3Z. All CD3 chains contain immunoreceptor tyrosine-based activation motifs (ITAMs) in their cytoplasmic domain. Upon TCR engagement, these motifs become phosphorylated by Src family protein tyrosine kinases LCK and FYN, resulting in the activation of downstream signaling pathways. In addition of this role of signal transduction in T-cell activation, CD3E plays an essential role in correct T-cell development. Also participates in internalization and cell surface down-regulation of TCR-CD3 complexes via endocytosis sequences present in CD3E cytosolic region. In addition to its role as a TCR coreceptor, it serves as a receptor for ITPRIPL1. Ligand recognition inhibits T-cell activation by promoting interaction with NCK1, which prevents CD3E-ZAP70 interaction and blocks the ERK-NFkB signaling cascade and calcium influx. The chain is T-cell surface glycoprotein CD3 epsilon chain (CD3E) from Oryctolagus cuniculus (Rabbit).